The sequence spans 411 residues: Bestrophin homolog 26 (411 aa).

The next 4 helical transmembrane spans lie at 30-50, 73-93, 235-255, and 272-292; these read FTAIFKELCLFLGLYFLFMVI, SHQEFTIPLEFLLGFFVSSVV, IPIPLAYPQAVFLAVRCYFAV, and TWITFFPVLTTFQYIFMMGWM.

This sequence belongs to the anion channel-forming bestrophin (TC 1.A.46) family. Calcium-sensitive chloride channel subfamily. In terms of assembly, forms oligomers.

The protein resides in the cell membrane. In terms of biological role, forms chloride channels. This chain is Bestrophin homolog 26 (best-26), found in Caenorhabditis elegans.